The chain runs to 931 residues: Aconitate hydratase A (931 aa).

A disordered region spans residues 402-454; that stretch reads SASPVDEASAESFPASDAPAYGSQENGAGAPQHADGTGAAVPSNPVTVTAPDG. [4Fe-4S] cluster-binding residues include Cys-472, Cys-538, and Cys-541.

Belongs to the aconitase/IPM isomerase family. It depends on [4Fe-4S] cluster as a cofactor.

It carries out the reaction citrate = D-threo-isocitrate. The catalysed reaction is citrate = cis-aconitate + H2O. The enzyme catalyses cis-aconitate + H2O = D-threo-isocitrate. It participates in carbohydrate metabolism; tricarboxylic acid cycle; isocitrate from oxaloacetate: step 2/2. Its function is as follows. Catalyzes the reversible isomerization of citrate to isocitrate via cis-aconitate in the tricarboxylic acid (TCA) cycle. Aconitase activity is important for the initiation of morphological and physiological differentiation of S.viridochromogenes. In addition, the apo form of AcnA (lacking the [4Fe-4S] cluster) functions as a RNA-binding regulatory protein, which binds to iron responsive elements (IREs) located on the untranslated region of certain mRNAs, including recA and ftsZ. Binding to IRE-like structures probably alters the target mRNA stability and regulates the protein amount. The apo form plays a regulatory role in oxidative stress response. The chain is Aconitate hydratase A from Streptomyces viridochromogenes (strain DSM 40736 / JCM 4977 / BCRC 1201 / Tue 494).